We begin with the raw amino-acid sequence, 296 residues long: Cytidine deaminase (296 aa).

2 CMP/dCMP-type deaminase domains span residues 52 to 172 (TAVE…FGPK) and 191 to 296 (THAD…YFAL). 93–95 (NQE) provides a ligand contact to substrate. Histidine 106 serves as a coordination point for Zn(2+). Glutamate 108 serves as the catalytic Proton donor. Cysteine 133 and cysteine 136 together coordinate Zn(2+).

This sequence belongs to the cytidine and deoxycytidylate deaminase family. Homodimer. Requires Zn(2+) as cofactor.

It catalyses the reaction cytidine + H2O + H(+) = uridine + NH4(+). The enzyme catalyses 2'-deoxycytidine + H2O + H(+) = 2'-deoxyuridine + NH4(+). Functionally, this enzyme scavenges exogenous and endogenous cytidine and 2'-deoxycytidine for UMP synthesis. The chain is Cytidine deaminase from Actinobacillus succinogenes (strain ATCC 55618 / DSM 22257 / CCUG 43843 / 130Z).